The sequence spans 226 residues: UPF0173 metal-dependent hydrolase Fnod_0635 (226 aa).

This sequence belongs to the UPF0173 family.

This chain is UPF0173 metal-dependent hydrolase Fnod_0635, found in Fervidobacterium nodosum (strain ATCC 35602 / DSM 5306 / Rt17-B1).